A 123-amino-acid chain; its full sequence is Large ribosomal subunit protein bL12 (123 aa).

This sequence belongs to the bacterial ribosomal protein bL12 family. In terms of assembly, homodimer. Part of the ribosomal stalk of the 50S ribosomal subunit. Forms a multimeric L10(L12)X complex, where L10 forms an elongated spine to which 2 to 4 L12 dimers bind in a sequential fashion. Binds GTP-bound translation factors.

Forms part of the ribosomal stalk which helps the ribosome interact with GTP-bound translation factors. Is thus essential for accurate translation. The protein is Large ribosomal subunit protein bL12 of Psychrobacter arcticus (strain DSM 17307 / VKM B-2377 / 273-4).